A 120-amino-acid polypeptide reads, in one-letter code: UPF0342 protein Csac_0863 (120 aa).

The protein belongs to the UPF0342 family.

The chain is UPF0342 protein Csac_0863 from Caldicellulosiruptor saccharolyticus (strain ATCC 43494 / DSM 8903 / Tp8T 6331).